The sequence spans 386 residues: Protein U3 (386 aa).

The polypeptide is Protein U3 (U3) (Human herpesvirus 6B (strain Z29) (HHV-6 variant B)).